Here is a 412-residue protein sequence, read N- to C-terminus: MIVINKEDCIRCGACQGVCPTGAISVKPEDVIYCDMCGGEPKCVEACPNDALRHEDITLEGGIKKKKITYSPEKCDKCGECVKVCPPGILKLVNDGKASRVPLEGFCVLCQQCVNVCPIEVIGIEGVKEPARVEIKIDKPIYIVDCVGCGLCVPECPVNAITLPKYGESIEIDEEKCIKCGICAQTCPWNSVYISGKKPQKSSRTIENFTLDKEECIGCNTCVEICPGGFIEPKSDLTVSLPEICPACGLCEKLCPTDAIELEVKLGPAKPVTEEGIVYNDENCKFCGRCALNCPNEAIRVVSPKGRVFPGLKKVDEKESYTICTTCGACTTVCPTGALKLVEVSKKVNGETVKRNRIQYNPSLCDKCGNCVDVCPYGILKLTDDEKLPVKGFCILCEKCIDACRFNALLIK.

4Fe-4S ferredoxin-type domains follow at residues 2–29, 30–57, 66–95, 96–127, 138–166, 168–197, 207–236, 237–265, 275–304, 311–344, 356–385, and 386–412; these read IVIN…VKPE, DVIY…HEDI, KKIT…LVND, GKAS…IEGV, DKPI…LPKY, ESIE…ISGK, ENFT…PKSD, LTVS…LEVK, EGIV…VVSP, GLKK…LVEV, NRIQ…LTDD, and EKLP…LLIK. The [4Fe-4S] cluster site is built by Cys9, Cys12, Cys15, and Cys19. [4Fe-4S] cluster is bound by residues Cys75, Cys78, Cys81, Cys85, Cys107, Cys110, Cys113, Cys117, Cys146, Cys149, Cys152, Cys156, Cys177, Cys180, Cys183, Cys187, Cys216, Cys219, Cys222, Cys226, Cys245, Cys248, Cys251, Cys255, Cys284, Cys287, Cys290, Cys294, Cys324, Cys327, Cys330, Cys334, Cys365, Cys368, Cys371, and Cys375.

It depends on [4Fe-4S] cluster as a cofactor.

This Methanothermus fervidus protein is Polyferredoxin protein MvhB (mvhB).